The primary structure comprises 723 residues: Nucleolar protein 11 (723 aa).

Its subcellular location is the nucleus. The protein resides in the nucleolus. Functionally, ribosome biogenesis factor. May be required for both optimal rDNA transcription and pre-rRNA processing. The polypeptide is Nucleolar protein 11 (NOL11) (Gallus gallus (Chicken)).